Here is a 176-residue protein sequence, read N- to C-terminus: Transcription termination/antitermination protein NusG (176 aa).

One can recognise a KOW domain in the interval 125 to 149 (GEVVRVVEGPFANFTATVEEYDVEH).

Belongs to the NusG family.

Functionally, participates in transcription elongation, termination and antitermination. This is Transcription termination/antitermination protein NusG from Helicobacter pylori (strain ATCC 700392 / 26695) (Campylobacter pylori).